A 372-amino-acid chain; its full sequence is Protein zntB (372 aa).

Helical transmembrane passes span 15 to 35 (LIMC…VIFI), 42 to 62 (LLGH…FMDL), and 70 to 90 (IGFY…AVIL). The interval 99 to 166 (ESGDSNHAHS…IAKSKNKKKS (68 aa)) is disordered. Positions 114–124 (IEKHSSEKKEV) are enriched in basic and acidic residues. The stretch at 133–167 (NGKDKKQKQQKQKQQKQQQQQKQNIAKSKNKKKSK) forms a coiled coil. Residues 137-146 (KKQKQQKQKQ) are compositionally biased toward basic residues. Positions 147–159 (QKQQQQQKQNIAK) are enriched in low complexity. 5 helical membrane passes run 170 to 192 (YLNS…EGVA), 207 to 229 (LMLA…IFSA), 237 to 257 (FKYC…FGLI), 271 to 291 (LAAV…PAAF), and 301 to 321 (FSNI…HSML). Positions 328 to 372 (AGDGGHGHSHGGHGHSHGHGHSHGGHSHDSQHVESPQSSSFNAFA) are disordered. A compositionally biased stretch (basic residues) spans 334–352 (GHSHGGHGHSHGHGHSHGG). Positions 360 to 372 (VESPQSSSFNAFA) are enriched in polar residues.

Belongs to the ZIP transporter (TC 2.A.5) family. ZupT subfamily.

The protein resides in the membrane. Its function is as follows. May transport divalent cations. May participate, with dstA, in the regulation of the differentiation of stalk cells during development. The chain is Protein zntB (zntB) from Dictyostelium discoideum (Social amoeba).